Here is a 239-residue protein sequence, read N- to C-terminus: Small ribosomal subunit protein uS2 (239 aa).

This sequence belongs to the universal ribosomal protein uS2 family.

In Histophilus somni (strain 129Pt) (Haemophilus somnus), this protein is Small ribosomal subunit protein uS2.